The chain runs to 68 residues: Conotoxin reg3.14 (68 aa).

The N-terminal stretch at 1-22 is a signal peptide; sequence MMSKLGVLLTICLLLFPLSVLP. A propeptide spanning residues 23-52 is cleaved from the precursor; the sequence is LDGDQPADQPAERMQDISAEQNPWFDPVKR. 3 disulfides stabilise this stretch: cysteine 53–cysteine 68, cysteine 54–cysteine 64, and cysteine 59–cysteine 67.

The protein belongs to the conotoxin M superfamily. Expressed by the venom duct.

The protein resides in the secreted. The protein is Conotoxin reg3.14 of Conus regius (Crown cone).